Consider the following 525-residue polypeptide: MTENIHKHRILILDFGSQYTQLVARRVRELGVYCELWAWDVTEAQIRDFNPSGIILSGGPESTTEENSPRAPQYVFEAGVPVFGICYGMQTMAMQLGGHVEASNEREFGYAQVEVVNDSALVRGIEDALTADGKPLLDVWMSHGDKVTAIPSDFITVASTESCPFAIMANEEKRFYGVQFHPEVTHTRQGMRMLERFVRDICQCEALWTPAKIIDDAVARIREQVGDDKVILGLSGGVDSSVTAMLLHRAIGKNLTCVFVDNGLLRLNEAEQVLDMFGDHFGLNIVHVPAEDRFLSALAGENDPEAKRKIIGRVFVEVFDEEALKLEDVKWLAQGTIYPDVIESAASATGKAHVIKSHHNVGGLPKEMKMGLVEPLKELFKDEVRKIGLELGLPYDMLYRHPFPGPGLGVRVLGEVKKEYCDLLRRADAIFIEELRKADLYDKVSQAFTVFLPVRSVGVMGDGRKYDWVVSLRAVETIDFMTAHWAHLPYDFLGRVSNRIINEVNGISRVVYDISGKPPATIEWE.

Positions R9 to L207 constitute a Glutamine amidotransferase type-1 domain. C86 (nucleophile) is an active-site residue. Active-site residues include H181 and E183. One can recognise a GMPS ATP-PPase domain in the interval W208–R400. S235–S241 serves as a coordination point for ATP.

Homodimer.

It carries out the reaction XMP + L-glutamine + ATP + H2O = GMP + L-glutamate + AMP + diphosphate + 2 H(+). Its pathway is purine metabolism; GMP biosynthesis; GMP from XMP (L-Gln route): step 1/1. In terms of biological role, catalyzes the synthesis of GMP from XMP. The sequence is that of GMP synthase [glutamine-hydrolyzing] from Escherichia fergusonii (strain ATCC 35469 / DSM 13698 / CCUG 18766 / IAM 14443 / JCM 21226 / LMG 7866 / NBRC 102419 / NCTC 12128 / CDC 0568-73).